Reading from the N-terminus, the 291-residue chain is uncharacterized protein (291 aa).

10 helical membrane passes run 1–21, 26–46, 67–87, 95–115, 117–137, 149–169, 179–199, 208–228, 241–261, and 270–290; these read MHNLIFAILCSVAVSVLLKIA, IIIEQAIAFNYITAITFSYFL, PIFLALGLLLPSVFIIMSKAV, SDAAQRLSLFLPILAAFLIFH, TLSQSKIIGVVLAFIGLFCLL, FKGVLGLIGVWFGYGIIDILF, FPATLFISFSLAACVMFIYLF, SSVIGGIVLGVLNFFNILFYI, VFAGMNIGVICLGTITGALVF, and WLGIIFSLSAIFCLYYLDKII. Residues 107–138 form the EamA domain; it reads ILAAFLIFHETLSQSKIIGVVLAFIGLFCLLT.

It localises to the cell membrane. This is an uncharacterized protein from Haemophilus influenzae (strain ATCC 51907 / DSM 11121 / KW20 / Rd).